The primary structure comprises 363 residues: Uroporphyrinogen decarboxylase (363 aa).

Residues 27 to 31 (RQAGR), Asp-77, Tyr-157, Thr-212, and His-333 contribute to the substrate site.

The protein belongs to the uroporphyrinogen decarboxylase family. Homodimer.

It localises to the cytoplasm. It catalyses the reaction uroporphyrinogen III + 4 H(+) = coproporphyrinogen III + 4 CO2. It functions in the pathway porphyrin-containing compound metabolism; protoporphyrin-IX biosynthesis; coproporphyrinogen-III from 5-aminolevulinate: step 4/4. In terms of biological role, catalyzes the decarboxylation of four acetate groups of uroporphyrinogen-III to yield coproporphyrinogen-III. This Cupriavidus pinatubonensis (strain JMP 134 / LMG 1197) (Cupriavidus necator (strain JMP 134)) protein is Uroporphyrinogen decarboxylase.